Here is a 466-residue protein sequence, read N- to C-terminus: Hydroxyacid-oxoacid transhydrogenase, mitochondrial (466 aa).

Lys444 carries the post-translational modification N6-acetyllysine. Ser451 bears the Phosphoserine mark.

Belongs to the iron-containing alcohol dehydrogenase family. Hydroxyacid-oxoacid transhydrogenase subfamily.

Its subcellular location is the mitochondrion. The catalysed reaction is (S)-3-hydroxybutanoate + 2-oxoglutarate = (R)-2-hydroxyglutarate + acetoacetate. It catalyses the reaction 4-hydroxybutanoate + 2-oxoglutarate = (R)-2-hydroxyglutarate + succinate semialdehyde. Its function is as follows. Catalyzes the cofactor-independent reversible oxidation of gamma-hydroxybutyrate (GHB) to succinic semialdehyde (SSA) coupled to reduction of 2-ketoglutarate (2-KG) to D-2-hydroxyglutarate (D-2-HG). L-3-hydroxybutyrate (L-3-OHB) is also a substrate for HOT when using 2-KG as hydrogen acceptor, resulting in the formation of D-2-HG. The protein is Hydroxyacid-oxoacid transhydrogenase, mitochondrial (ADHFE1) of Bos taurus (Bovine).